The primary structure comprises 359 residues: 3-isopropylmalate dehydrogenase (359 aa).

Residue 77 to 88 (GPKWGTGDVRPE) coordinates NAD(+). Arg-95, Arg-105, Arg-134, and Asp-223 together coordinate substrate. Residues Asp-223, Asp-248, and Asp-252 each contribute to the Mg(2+) site. Position 287 to 298 (287 to 298 (GSAPDLPAGKVN)) interacts with NAD(+).

This sequence belongs to the isocitrate and isopropylmalate dehydrogenases family. In terms of assembly, homodimer. The cofactor is Mg(2+). It depends on Mn(2+) as a cofactor.

The protein resides in the cytoplasm. The catalysed reaction is (2R,3S)-3-isopropylmalate + NAD(+) = 4-methyl-2-oxopentanoate + CO2 + NADH. Its pathway is amino-acid biosynthesis; L-leucine biosynthesis; L-leucine from 3-methyl-2-oxobutanoate: step 3/4. Catalyzes the oxidation of 3-carboxy-2-hydroxy-4-methylpentanoate (3-isopropylmalate) to 3-carboxy-4-methyl-2-oxopentanoate. The product decarboxylates to 4-methyl-2 oxopentanoate. The chain is 3-isopropylmalate dehydrogenase (LEU2) from Diutina rugosa (Yeast).